Consider the following 29-residue polypeptide: Cytochrome b6-f complex subunit 8 (29 aa).

Residues 3–23 form a helical membrane-spanning segment; that stretch reads IITFGWVAVAAFFALSIAFVV.

It belongs to the PetN family. The 4 large subunits of the cytochrome b6-f complex are cytochrome b6, subunit IV (17 kDa polypeptide, PetD), cytochrome f and the Rieske protein, while the 4 small subunits are PetG, PetL, PetM and PetN. The complex functions as a dimer.

Its subcellular location is the cellular thylakoid membrane. Component of the cytochrome b6-f complex, which mediates electron transfer between photosystem II (PSII) and photosystem I (PSI), cyclic electron flow around PSI, and state transitions. The sequence is that of Cytochrome b6-f complex subunit 8 from Synechococcus sp. (strain JA-3-3Ab) (Cyanobacteria bacterium Yellowstone A-Prime).